The primary structure comprises 771 residues: Hyperosmolality-gated Ca2+ permeable channel 1.2 (771 aa).

Residues 1-4 (MATL) lie on the Extracellular side of the membrane. A helical transmembrane segment spans residues 5 to 27 (QDIGVSAGINILSAFVFFIIFAV). Residues 28-100 (LRLQPFNDRV…AGLDSVVYLR (73 aa)) are Cytoplasmic-facing. A helical membrane pass occupies residues 101–125 (IYWLGLKIFTPIAVLAWAVLVPVNW). The Extracellular portion of the chain corresponds to 126-156 (TNNTLEMAKQLRNVTSSDIDKLSVSNIPEYS). Residues 157 to 178 (MRFWTHIVMAYAFTIWTCYVLM) traverse the membrane as a helical segment. The Cytoplasmic segment spans residues 179–374 (KEYETIANMR…AIPYVSLTVR (196 aa)). Residues 375-401 (RLIMHVAFFFLTFFFIVPIAFVQSLAT) form a helical membrane-spanning segment. Over 402–419 (IEGIVKAAPFLKFIVDDK) the chain is Extracellular. Residues 420-445 (FMKSVIQGFLPGIALKLFLAFLPSIL) traverse the membrane as a helical segment. Topologically, residues 446-462 (MIMSKFEGFTSISSLER) are cytoplasmic. A helical membrane pass occupies residues 463 to 485 (RAAFRYYIFNLVNVFLASVIAGA). At 486–504 (AFEQLNSFLNQSANQIPKT) the chain is on the extracellular side. The helical transmembrane segment at 505–533 (IGVAIPMKATFFITYIMVDGWAGVAGEIL) threads the bilayer. The Cytoplasmic portion of the chain corresponds to 534 to 566 (MLKPLIMFHLKNAFLVKTDKDREEAMDPGSIGF). The chain crosses the membrane as a helical span at residues 567 to 588 (NTGEPRIQLYFLLGLVYAPVTP). Residue Met589 is a topological domain, extracellular. A helical membrane pass occupies residues 590–605 (LLPFILVFFALAYIVY). At 606–625 (RHQIINVYNQEYESAAAFWP) the chain is on the cytoplasmic side. Residues 626–648 (DVHGRVIAALVISQLLLMGLLGT) form a helical membrane-spanning segment. Residues 649-651 (KHA) lie on the Extracellular side of the membrane. The helical transmembrane segment at 652–670 (ALAAPFLIALPVLTIGFHH) threads the bilayer. At 671-771 (FCKGRYEPAF…PSLPFSGKLV (101 aa)) the chain is on the cytoplasmic side. Residues 741–771 (PTKRQSRRNTPAPSIISGDDSPSLPFSGKLV) form a disordered region.

The protein belongs to the CSC1 (TC 1.A.17) family. Homodimer.

Its subcellular location is the membrane. With respect to regulation, activated by hyperosmotic shock after mannitol or NaCl treatment. Activated by mechanical pressure: activated in response to membrane stretch and poke. Membrane lipids play a key role in mechanosensation by acting as a wall mainly formed by lipid head groups. Functionally, acts as an osmosensitive calcium-permeable cation channel. Specifically conducts cations including Ca(2+), K(+) and Na(+) in vitro. Inactivation or closure of the channel is calcium-dependent. Mechanosensitive ion channel that converts mechanical stimuli into a flow of ions: activated in response to membrane stretch and poke. This Arabidopsis thaliana (Mouse-ear cress) protein is Hyperosmolality-gated Ca2+ permeable channel 1.2.